A 172-amino-acid chain; its full sequence is Peptidyl-prolyl cis-trans isomerase (172 aa).

The PPIase cyclophilin-type domain occupies 7 to 170 (FFDMAIAGNP…RPVTIADCGQ (164 aa)).

This sequence belongs to the cyclophilin-type PPIase family. As to expression, expressed in meristematic tissues, with higher levels in nodules.

The protein resides in the cytoplasm. It carries out the reaction [protein]-peptidylproline (omega=180) = [protein]-peptidylproline (omega=0). Its activity is regulated as follows. Binds cyclosporin A (CsA). CsA mediates some of its effects via an inhibitory action on PPIase. In terms of biological role, PPIases accelerate the folding of proteins. It catalyzes the cis-trans isomerization of proline imidic peptide bonds in oligopeptides. The protein is Peptidyl-prolyl cis-trans isomerase of Lupinus luteus (European yellow lupine).